The primary structure comprises 332 residues: MMQDLRLILIVVGAIAIIALLLHGLWTSRKERSSLFRDRPVKRAKKARDETPLDDLDEGVGEVRVKGARPQQSEPSFDSASVDSSSFDNYGSAREDVRSEAKSPFEHMSPVSAYDPLLDEATPVDSPRSQVRGDANPQVVDPRQAFIPESDIDAPREPFAYDAPSSAQQQPVSHSLHEKVQPAPQQPAEPAAAKETVLVLHVVAHQGGVIGGELLLQSLLQAGFQFGEMNIFHRHVNPAGAGPVLFSLANMVKPGSFNVDTMSEFSTPGVSIFMMVPSYGDAGQNFKLMLQSAQRIADDVGGVVQDDERRMMTPQKVESYKARIRDVLKANA.

Residues 1–6 (MMQDLR) lie on the Periplasmic side of the membrane. A helical transmembrane segment spans residues 7-27 (LILIVVGAIAIIALLLHGLWT). Over 28–332 (SRKERSSLFR…RIRDVLKANA (305 aa)) the chain is Cytoplasmic. A compositionally biased stretch (basic and acidic residues) spans 40–51 (PVKRAKKARDET). Residues 40 to 189 (PVKRAKKARD…VQPAPQQPAE (150 aa)) are disordered. The segment covering 76 to 88 (SFDSASVDSSSFD) has biased composition (low complexity). Basic and acidic residues predominate over residues 93 to 105 (AREDVRSEAKSPF).

Belongs to the ZipA family. Interacts with FtsZ via their C-terminal domains.

Its subcellular location is the cell inner membrane. In terms of biological role, essential cell division protein that stabilizes the FtsZ protofilaments by cross-linking them and that serves as a cytoplasmic membrane anchor for the Z ring. Also required for the recruitment to the septal ring of downstream cell division proteins. This chain is Cell division protein ZipA, found in Pectobacterium atrosepticum (strain SCRI 1043 / ATCC BAA-672) (Erwinia carotovora subsp. atroseptica).